An 865-amino-acid polypeptide reads, in one-letter code: Leucine--tRNA ligase (865 aa).

Positions 41-51 (PYPSGRIHMGH) match the 'HIGH' region motif. The 'KMSKS' region signature appears at 614 to 618 (KMSKS). Lys-617 is an ATP binding site.

This sequence belongs to the class-I aminoacyl-tRNA synthetase family.

It is found in the cytoplasm. It catalyses the reaction tRNA(Leu) + L-leucine + ATP = L-leucyl-tRNA(Leu) + AMP + diphosphate. The protein is Leucine--tRNA ligase of Rhodospirillum centenum (strain ATCC 51521 / SW).